The following is a 136-amino-acid chain: Small ribosomal subunit protein uS9 (136 aa).

This sequence belongs to the universal ribosomal protein uS9 family.

The chain is Small ribosomal subunit protein uS9 from Synechococcus sp. (strain JA-2-3B'a(2-13)) (Cyanobacteria bacterium Yellowstone B-Prime).